We begin with the raw amino-acid sequence, 109 residues long: Protein reprimo (109 aa).

N-linked (GlcNAc...) asparagine glycans are attached at residues Asn-7 and Asn-18. The chain crosses the membrane as a helical span at residues Val-56 to Leu-76. Position 98 is a phosphoserine (Ser-98).

It belongs to the reprimo family.

It is found in the cytoplasm. The protein localises to the membrane. May be involved in the regulation of p53-dependent G2 arrest of the cell cycle. Seems to induce cell cycle arrest by inhibiting CDK1 activity and nuclear translocation of the CDC2 cyclin B1 complex. In Homo sapiens (Human), this protein is Protein reprimo (RPRM).